The primary structure comprises 1173 residues: MKGIFLLLMLVMPQTHQAAESGNDDNSVFDLFELTGYNRKAGSRKPQGLHLVKGPDPSSPAYRIEDADLIPPLPEDKFQDLLDAIRADRGFILLATLRQAKKSRGALLSVERKDGGGHIFSLISNGRARTLDLSLSGERKQQVVSVEDAVLATGNWTNITLFVQEDRAQLYVGCNKMENAELDVPIQKIFTENLASTAHLRVAKGGVKDNFQGVLQNVRFVFGTTLEAILRNKGCLSMTNSVITLDNPVNGSSPAIRTNYIGHKTKDLQAVCGFSCDDLSKLFAEMKGLRTLVTTLKDQVTKETEKNELIAQIVTRTPGVCLHNGVLHKNRDEWTVDSCTECTCQNSATICRKVSCPLMPCTNATIPDGECCPRCWPSDSADDDWSPWSDWTPCSVTCGHGIQQRGRSCDSLNNPCEGSSVQTRSCQIQDCDKRFKQDGGWSHWSPWSSCSVTCGSGQITRIRLCNSPVPQLNGKQCEGEGRENKPCQKDPCPINGQWGPWSLWDTCTVTCGGGMQKRERLCNNPKPQYEGKDCIGEPTDSQICNKQDCPIDGCLSNPCFAGVKCTSFIDGSWKCGSCPPGYRGNGITCKDIDECKEVPDACFTLNGVHRCENTEPGYNCLPCPPRFTGTQPFGKGIEEAKANKQVCKPRNPCADGTHDCHKNARCIYLGHYSDPMFRCECRPGYAGNGIICGEDTDLDGWPNENLTCVDNATYHCLKDNCPNLPNSGQEDYDKDGMGDACDKDDDNDGILDDRDNCQFVYNPAQYDYDRDDVGDRCDNCPYNHNPDQADTDRNGEGDACSVDIDGDGILNERDNCAYVYNVDQKDTDKDGVGDQCDNCPLEHNPEQTDSDSDLIGDKCDNNQDIDEDGHQNNLDNCPYIPNANQADHDKDGKGDACDHDDDNDGVPDDKDNCRLVPNPDQTDTNGDGRGDACQYDFDDDSIPDAEDVCPENVEISTTDFRKFQMVPLDPKGTSQIDPNWVVRHQGKELVQTVNCDPGIAVGFDEFSAVDFSGTFFINTERDDDYAGFVFGYQSSSRFYVVMWKQITQTYWDTTPTVAQGYSGLSIKVVNSTSGPGEHLRNALWHTGNTPGQVRTLWHDPHQKGWKDFTAYRWHLTHRPKTGFIRVVMYEGKRVMADSGPIYDKTYAGGRLGLFVFSQEMVFFSDLKYECRDS.

Residues 1-18 (MKGIFLLLMLVMPQTHQA) form the signal peptide. The 203-residue stretch at 22-224 (GNDDNSVFDL…LQNVRFVFGT (203 aa)) folds into the Laminin G-like domain. The segment at 50 to 98 (HLVKGPDPSSPAYRIEDADLIPPLPEDKFQDLLDAIRADRGFILLATLR) is heparin-binding. 2 N-linked (GlcNAc...) asparagine glycosylation sites follow: asparagine 155 and asparagine 158. A disulfide bond links cysteine 174 and cysteine 235. Residues asparagine 250 and asparagine 363 are each glycosylated (N-linked (GlcNAc...) asparagine). Residues 319–376 (GVCLHNGVLHKNRDEWTVDSCTECTCQNSATICRKVSCPLMPCTNATIPDGECCPRCW) enclose the VWFC domain. TSP type-1 domains are found at residues 382–432 (DDDW…QDCD), 438–493 (DGGW…DPCP), and 495–550 (NGQW…QDCP). Cystine bridges form between cysteine 394-cysteine 426, cysteine 398-cysteine 431, cysteine 409-cysteine 416, cysteine 450-cysteine 487, cysteine 454-cysteine 492, cysteine 465-cysteine 477, cysteine 507-cysteine 544, cysteine 511-cysteine 549, cysteine 522-cysteine 534, cysteine 554-cysteine 565, cysteine 559-cysteine 575, cysteine 578-cysteine 589, cysteine 595-cysteine 611, cysteine 602-cysteine 620, cysteine 623-cysteine 647, cysteine 653-cysteine 666, cysteine 660-cysteine 679, and cysteine 681-cysteine 692. One can recognise an EGF-like 1 domain in the interval 550–590 (PIDGCLSNPCFAGVKCTSFIDGSWKCGSCPPGYRGNGITCK). Residues 649 to 693 (PRNPCADGTHDCHKNARCIYLGHYSDPMFRCECRPGYAGNGIICG) enclose the EGF-like 2 domain. TSP type-3 repeat units lie at residues 694 to 729 (EDTD…NSGQ), 730 to 765 (EDYD…NPAQ), 766 to 788 (YDYD…NPDQ), 789 to 824 (ADTD…NVDQ), 825 to 847 (KDTD…NPEQ), 848 to 885 (TDSD…NANQ), 886 to 921 (ADHD…NPDQ), and 922 to 957 (TDTN…EIST). 2 N-linked (GlcNAc...) asparagine glycosylation sites follow: asparagine 705 and asparagine 711. 9 disulfide bridges follow: cysteine 708–cysteine 716, cysteine 721–cysteine 741, cysteine 757–cysteine 777, cysteine 780–cysteine 800, cysteine 816–cysteine 836, cysteine 839–cysteine 859, cysteine 877–cysteine 897, cysteine 913–cysteine 933, and cysteine 949–cysteine 1170. Residues 838–935 (NCPLEHNPEQ…GDGRGDACQY (98 aa)) form a disordered region. Residues 886–897 (ADHDKDGKGDAC) show a composition bias toward basic and acidic residues. A Cell attachment site motif is present at residues 929-931 (RGD). Positions 961–1173 (RKFQMVPLDP…SDLKYECRDS (213 aa)) constitute a TSP C-terminal domain. An N-linked (GlcNAc...) asparagine glycan is attached at asparagine 1070.

The protein belongs to the thrombospondin family. Homotrimer; disulfide-linked.

It localises to the secreted. The protein localises to the cell surface. The protein resides in the extracellular space. Its subcellular location is the extracellular matrix. It is found in the endoplasmic reticulum. It localises to the sarcoplasmic reticulum. Functionally, adhesive glycoprotein that mediates cell-to-cell and cell-to-matrix interactions. Can bind to fibrinogen, fibronectin, laminin, type V collagen and integrins alpha-V/beta-1, alpha-V/beta-3 and alpha-IIb/beta-3. May play a role in ER stress response. The polypeptide is Thrombospondin-1 (thbs1) (Xenopus laevis (African clawed frog)).